Reading from the N-terminus, the 452-residue chain is Septin-10 (452 aa).

A Septin-type G domain is found at 36–302 (QGFCFNILCV…ELYRRCKLQE (267 aa)). The tract at residues 46 to 53 (GETGIGKS) is G1 motif. Residues 46–53 (GETGIGKS), G101, 182–190 (KADTISKSE), G236, and R251 each bind GTP. The G3 motif stretch occupies residues 98 to 101 (NTVG). Residues 181 to 184 (AKAD) are G4 motif. Phosphoserine is present on S414.

This sequence belongs to the TRAFAC class TrmE-Era-EngA-EngB-Septin-like GTPase superfamily. Septin GTPase family. Septins polymerize into heterooligomeric protein complexes that form filaments, and can associate with cellular membranes, actin filaments and microtubules. GTPase activity is required for filament formation. Interacts with ADGB. Proteolytically cleaved in vitro in a calmodulin-dependent manner.

The protein localises to the cytoplasm. Its subcellular location is the cytoskeleton. The protein resides in the cell projection. It is found in the cilium. It localises to the flagellum. Functionally, filament-forming cytoskeletal GTPase. May play a role in cytokinesis (Potential). The sequence is that of Septin-10 from Mus musculus (Mouse).